A 495-amino-acid polypeptide reads, in one-letter code: Sialin (495 aa).

Residues 1–18 (MRSPVRDLARNDGEESTD) show a composition bias toward basic and acidic residues. Residues 1–24 (MRSPVRDLARNDGEESTDRTPLLP) are disordered. The Cytoplasmic segment spans residues 1 to 41 (MRSPVRDLARNDGEESTDRTPLLPGAPRAEAAPVCCSARYN). S3 is subject to Phosphoserine. The Dileucine internalization motif signature appears at 22-23 (LL). The helical transmembrane segment at 42 to 62 (LAILAFFGFFIVYALRVNLSV) threads the bilayer. The Lumenal portion of the chain corresponds to 63–109 (ALVDMVDSNTTLEDNRTSKACPEHSAPIKVHHNQTGKKYQWDAETQG). N71, N77, and N95 each carry an N-linked (GlcNAc...) asparagine glycan. The helical transmembrane segment at 110–130 (WILGSFFYGYIITQIPGGYVA) threads the bilayer. The Cytoplasmic segment spans residues 131 to 136 (SKIGGK). Residues 137–157 (MLLGFGILGTAVLTLFTPIAA) form a helical membrane-spanning segment. Residue D158 is a topological domain, lumenal. A helical transmembrane segment spans residues 159–179 (LGVGPLIVLRALEGLGEGVTF). The Cytoplasmic portion of the chain corresponds to 180 to 200 (PAMHAMWSSWAPPLERSKLLS). Residues 201–221 (ISYAGAQLGTVISLPLSGIIC) form a helical membrane-spanning segment. The Lumenal portion of the chain corresponds to 222–227 (YYMNWT). Residues 228-248 (YVFYFFGTIGIFWFLLWIWLV) form a helical membrane-spanning segment. At 249 to 279 (SDTPQKHKRISHYEKEYILSSLRNQLSSQKS) the chain is on the cytoplasmic side. Residues 280-300 (VPWVPILKSLPLWAIVVAHFS) traverse the membrane as a helical segment. The Lumenal segment spans residues 301–328 (YNWTFYTLLTLLPTYMKEILRFNVQENG). A helical transmembrane segment spans residues 329–349 (FLSSLPYLGSWLCMILSGQAA). Topologically, residues 350-365 (DNLRAKWNFSTLCVRR) are cytoplasmic. Residues 366–386 (IFSLIGMIGPAVFLVAAGFIG) form a helical membrane-spanning segment. At 387-391 (CDYSL) the chain is on the lumenal side. A helical transmembrane segment spans residues 392–412 (AVAFLTISTTLGGFCSSGFSI). Residues 413–423 (NHLDIAPSYAG) are Cytoplasmic-facing. The chain crosses the membrane as a helical span at residues 424 to 444 (ILLGITNTFATIPGMVGPVIA). Topologically, residues 445–457 (KSLTPDNTVGEWQ) are lumenal. The helical transmembrane segment at 458-478 (TVFYIAAAINVFGAIFFTLFA) threads the bilayer. Over 479-495 (KGEVQNWALNDHHGHRH) the chain is Cytoplasmic.

The protein belongs to the major facilitator superfamily. Sodium/anion cotransporter family. In terms of tissue distribution, in the adult, detected in placenta, kidney and pancreas. Abundant in the endothelial cells of tumors from ovary, colon, breast and lung, but is not detected in endothelial cells from the corresponding normal tissues. Highly expressed in salivary glands and liver, with lower levels of expression in brain, spleen kidney, muscle and pancreas. Expressed in acinar cells of salivary glands (at protein level).

The protein localises to the basolateral cell membrane. The protein resides in the cytoplasmic vesicle. Its subcellular location is the secretory vesicle. It localises to the synaptic vesicle membrane. It is found in the lysosome membrane. The catalysed reaction is N-acetylneuraminate(in) + H(+)(in) = N-acetylneuraminate(out) + H(+)(out). It catalyses the reaction D-glucuronate(out) + H(+)(out) = D-glucuronate(in) + H(+)(in). It carries out the reaction 2 nitrate(out) + H(+)(out) = 2 nitrate(in) + H(+)(in). The enzyme catalyses L-aspartate(out) = L-aspartate(in). The catalysed reaction is L-glutamate(out) = L-glutamate(in). It catalyses the reaction N-acetyl-L-aspartyl-L-glutamate(out) = N-acetyl-L-aspartyl-L-glutamate(in). In terms of biological role, multifunctional anion transporter that operates via two distinct transport mechanisms, namely proton-coupled anion cotransport and membrane potential-dependent anion transport. Electroneutral proton-coupled acidic monosaccharide symporter, with a sugar to proton stoichiometry of 1:1. Exports glucuronic acid and free sialic acid derived from sialoglycoconjugate degradation out of lysosomes, driven by outwardly directed lysosomal pH gradient. May regulate lysosome function and metabolism of sialylated conjugates that impact oligodendrocyte lineage differentiation and myelinogenesis in the central nervous system. Electrogenic proton-coupled nitrate symporter that transports nitrate ions across the basolateral membrane of salivary gland acinar cells, with nitrate to proton stoichiometry of 2:1. May contribute to nitrate clearance from serum by salivary glands, where it is further concentrated and secreted in the saliva. Uses membrane potential to drive the uptake of acidic amino acids and peptides into synaptic vesicles. Responsible for synaptic vesicular storage of L-aspartate and L-glutamate in pinealocytes as well as vesicular uptake of N-acetyl-L-aspartyl-L-glutamate neuropeptide, relevant to aspartegic-associated glutamatergic neurotransmission and activation of metabotropic receptors that inhibit subsequent transmitter release. Receptor for CM101, a polysaccharide produced by group B Streptococcus with antipathoangiogenic properties. This is Sialin (SLC17A5) from Homo sapiens (Human).